A 66-amino-acid polypeptide reads, in one-letter code: Small ribosomal subunit protein eS27 (66 aa).

4 residues coordinate Zn(2+): Cys21, Cys24, Cys40, and Cys43. A C4-type zinc finger spans residues 21–43 (CPNCGNEQTVFSHATFPVRCLSC).

The protein belongs to the eukaryotic ribosomal protein eS27 family. Part of the 30S ribosomal subunit. Zn(2+) serves as cofactor.

The chain is Small ribosomal subunit protein eS27 from Sulfurisphaera tokodaii (strain DSM 16993 / JCM 10545 / NBRC 100140 / 7) (Sulfolobus tokodaii).